The following is a 256-amino-acid chain: Protein FixA (256 aa).

Belongs to the ETF beta-subunit/FixA family. As to quaternary structure, heterodimer of FixA and FixB.

It participates in amine and polyamine metabolism; carnitine metabolism. Functionally, required for anaerobic carnitine reduction. May bring reductant to CaiA. The chain is Protein FixA from Salmonella dublin (strain CT_02021853).